We begin with the raw amino-acid sequence, 369 residues long: Replication factor C subunit 5 (369 aa).

The disordered stretch occupies residues 21 to 40 (INKGKDVVGFGPPPQSKATP). ATP is bound at residue 79–86 (GPPGTGKT).

The protein belongs to the activator 1 small subunits family. Heterotetramer of subunits RFC2, RFC3, RFC4 and RFC5 that can form a complex with RFC1.

It localises to the nucleus. Its function is as follows. Functions in cell replication and proliferation. May be involved in chromatin assembly and remodeling. Plays a role in the negative control of pathogenesis-related gene expression and systemic acquired resistance (SAR). In Arabidopsis thaliana (Mouse-ear cress), this protein is Replication factor C subunit 5 (RFC5).